An 840-amino-acid polypeptide reads, in one-letter code: Phosphatidylglycerol lysyltransferase (840 aa).

At 1-8 (MTEELKNR) the chain is on the cytoplasmic side. The helical transmembrane segment at 9 to 29 (LLSILKFVFAAVLFIAVVATL) threads the bilayer. The Extracellular portion of the chain corresponds to 30–52 (YHELAHINFKQTLEAFSKINRWY). A helical transmembrane segment spans residues 53–73 (LVGLFICGGSAMILLSLYDLI). Residues 74–89 (LVKGLKLDIPLIRVFK) lie on the Cytoplasmic side of the membrane. The chain crosses the membrane as a helical span at residues 90-110 (ISYIINALNAIVGFGGFIGAG). Topologically, residues 111–129 (FRAFIYKNYTTDRKKLVHA) are extracellular. The helical transmembrane segment at 130-150 (ISIILISMLMGLSLLSILVVL) threads the bilayer. At 151–167 (HIFDASHIINKVSWVRW) the chain is on the cytoplasmic side. The helical transmembrane segment at 168-188 (ILYVVALFLPLFIAYTMINPI) threads the bilayer. Topologically, residues 189-193 (DRNNK) are extracellular. Residues 194–216 (YLGVYCTLVSSFEWLAAATVLYL) form a helical membrane-spanning segment. Topologically, residues 217–229 (STVIVDINIAFTT) are cytoplasmic. The chain crosses the membrane as a helical span at residues 230 to 250 (VIGIFIIAALSGLVSFIPGGF). The Extracellular portion of the chain corresponds to 251-271 (GAFDLVVLLGLKSLGVPEEKV). The chain crosses the membrane as a helical span at residues 272 to 292 (LLALLLYRFAYYFVPVIIALI). Topologically, residues 293-335 (LSTFEFGSSARKYFEESKYFVPARDVTSFLFSYQKDIIAKIPS) are cytoplasmic. The chain crosses the membrane as a helical span at residues 336–356 (FALATLVLITSFVFFINNITI). The Extracellular segment spans residues 357–366 (VYDGLYDDHH). A helical transmembrane segment spans residues 367–387 (FAYYIMLSVHTSACLLLLINV). Residues 388-394 (RGVFKQS) are Cytoplasmic-facing. 2 helical membrane passes run 395–415 (RRAI…TIYT) and 416–436 (YASL…ILAY). Residues 437–450 (RRSKVMKRPFRLKR) are Cytoplasmic-facing. A helical membrane pass occupies residues 451–471 (LIFTIILSMLVLYVNHFIISE). Residues 472–490 (TLYALDIYHIEMDTSLLKY) are Extracellular-facing. The helical transmembrane segment at 491–511 (YFWLTILVVVILVGIVAWLLG) threads the bilayer. Residues 512–840 (SRYTRPHQLE…LKVMRVIRHK (329 aa)) lie on the Cytoplasmic side of the membrane.

Belongs to the LPG synthase family.

The protein resides in the cell membrane. The catalysed reaction is L-lysyl-tRNA(Lys) + a 1,2-diacyl-sn-glycero-3-phospho-(1'-sn-glycerol) = a 1,2-diacyl-sn-glycero-3-phospho-1'-(3'-O-L-lysyl)-sn-glycerol + tRNA(Lys). Its function is as follows. Catalyzes the transfer of a lysyl group from L-lysyl-tRNA(Lys) to membrane-bound phosphatidylglycerol (PG), which produces lysylphosphatidylglycerol (LPG), a major component of the bacterial membrane with a positive net charge. LPG synthesis contributes to bacterial virulence as it is involved in the resistance mechanism against cationic antimicrobial peptides (CAMP) produces by the host's immune system (defensins, cathelicidins) and by the competing microorganisms (bacteriocins). In fact, the modification of anionic phosphatidylglycerol with positively charged L-lysine results in repulsion of the peptides. This is Phosphatidylglycerol lysyltransferase (mprF) from Staphylococcus haemolyticus (strain JCSC1435).